Here is a 371-residue protein sequence, read N- to C-terminus: Dead end protein homolog 1 (371 aa).

RRM domains are found at residues 85–163 (PQDI…ALDG) and 165–245 (PGNF…KLRS).

It is found in the nucleus. The protein resides in the cytoplasm. Its function is as follows. RNA-binding factor that positively regulates gene expression by prohibiting miRNA-mediated gene suppression. Relieves miRNA repression in germline cells. Prohibits the function of several miRNAs by blocking the accessibility of target mRNAs. Sequence-specific RNA-binding factor that binds to U-rich regions (URRs) in the 3'untranslated region (3'-UTR) of several mRNAs. Does not bind to miRNAs. May play a role during early embryonic survival. This Xenopus laevis (African clawed frog) protein is Dead end protein homolog 1 (dnd1).